The following is a 66-amino-acid chain: Dermaseptin PD-3-7 (66 aa).

The first 22 residues, 1–22, serve as a signal peptide directing secretion; the sequence is MSFMKKSLLLVLFLGVVSLSNC. A propeptide spanning residues 23-40 is cleaved from the precursor; the sequence is EEEKGENENEDHEEHHEE.

As to expression, expressed by the skin glands.

The protein resides in the secreted. Its function is as follows. Possesses a potent antimicrobial activity against Gram-positive and Gram-negative bacteria. Probably acts by disturbing membrane functions with its amphipathic structure. This chain is Dermaseptin PD-3-7, found in Agalychnis dacnicolor (Giant Mexican leaf frog).